The sequence spans 111 residues: Small ribosomal subunit protein uS10 (111 aa).

The protein belongs to the universal ribosomal protein uS10 family. Part of the 30S ribosomal subunit.

In terms of biological role, involved in the binding of tRNA to the ribosomes. The polypeptide is Small ribosomal subunit protein uS10 (Xanthomonas euvesicatoria pv. vesicatoria (strain 85-10) (Xanthomonas campestris pv. vesicatoria)).